We begin with the raw amino-acid sequence, 544 residues long: GDP-mannose 4,6-dehydratase sdnI (544 aa).

Residues Gly-16–Asp-21, Arg-41, Asp-64–Met-65, and Leu-86–Ser-90 contribute to the NADP(+) site. Residue Ser-90 participates in substrate binding. Catalysis depends on nucleophile residues Glu-135 and Tyr-157. Tyr-157 serves as a coordination point for substrate. Lys-161 provides a ligand contact to NADP(+). Asn-186 contributes to the substrate binding site. 2 residues coordinate NADP(+): His-187 and Arg-192. Substrate-binding positions include Arg-192 to Lys-200, Gly-219, Arg-225, and Arg-303 to Glu-306. A disordered region spans residues Gly-366 to Val-406. Composition is skewed to polar residues over residues Thr-368 to Gly-381 and Gly-389 to Ser-404.

Belongs to the NAD(P)-dependent epimerase/dehydratase family. GDP-mannose 4,6-dehydratase subfamily. NADP(+) serves as cofactor.

It carries out the reaction GDP-alpha-D-mannose = GDP-4-dehydro-alpha-D-rhamnose + H2O. It functions in the pathway antibiotic biosynthesis. GDP-mannose 4,6-dehydratase; part of the gene cluster that mediates the biosynthesis of sordarin and hypoxysordarin, glycoside antibiotics with a unique tetracyclic diterpene aglycone structure. First, the geranylgeranyl diphosphate synthase sdnC constructs GGDP from farnesyl diphosphate and isopentenyl diphosphate. The diterpene cyclase sdnA then catalyzes the cyclization of GGDP to afford cycloaraneosene. Cycloaraneosene is then hydroxylated four times by the putative cytochrome P450 monooxygenases sdnB, sdnE, sdnF and sdnH to give a hydroxylated cycloaraneosene derivative such as cycloaraneosene-8,9,13,19-tetraol. Although the order of the hydroxylations is unclear, at least C8, C9 and C13 of the cycloaraneosene skeleton are hydroxylated before the sordaricin formation. Dehydration of the 13-hydroxy group of the hydroxylated cycloaraneosene derivative might be catalyzed by an unassigned hypothetical protein such as sdnG and sdnP to construct the cyclopentadiene moiety. The FAD-dependent oxidoreductase sdnN is proposed to catalyze the oxidation at C9 of the hydroxylated cycloaraneosene derivative and also catalyze the Baeyer-Villiger oxidation to give the lactone intermediate. The presumed lactone intermediate would be hydrolyzed to give an acrolein moiety and a carboxylate moiety. Then, [4+2]cycloaddition would occur between the acrolein moiety and the cyclopentadiene moiety to give sordaricin. SdnN might also be involved in the [4+2]cycloaddition after the hypothesized oxidation to accommodate the oxidized product and prompt the [4+2]cycloaddition. GDP-6-deoxy-D-altrose may be biosynthesized from GDP-D-mannose by the putative GDP-mannose-4,6-dehydratase sdnI and the short-chain dehydrogenase sdnK. The glycosyltransferase sdnJ catalyzes the attachment of 6-deoxy-D-altrose onto the 19-hydroxy group of sordaricin to give 4'-O-demethylsordarin. The methyltransferase sdnD would complete the biosynthesis of sordarin. Sordarin can be further modified into hypoxysordarin. The unique acyl chain at the 3'-hydroxy group of hypoxysordarin would be constructed by an iterative type I PKS sdnO and the trans-acting polyketide methyltransferase sdnL. SdnL would be responsible for the introduction of an alpha-methyl group of the polyketide chain. Alternatively, the beta-lactamase-like protein sdnR might be responsible for the cleavage and transfer of the polyketide chain from the PKS sdnO to sordarin. Two putative cytochrome P450 monooxygenases, sdnQ and sdnT, might catalyze the epoxidations of the polyketide chain to complete the biosynthesis of hypoxysordarin. Transcriptional regulators sdnM and sdnS are presumably encoded for the transcriptional regulation of the expression of the sdn gene cluster. The protein is GDP-mannose 4,6-dehydratase sdnI of Sordaria araneosa (Pleurage araneosa).